The sequence spans 734 residues: Transcriptional regulator AacuB (734 aa).

The zn(2)-C6 fungal-type DNA-binding region spans 26 to 52; the sequence is CVLCQQRKIKCDRTFPCTNCVRAHVQC. Positions 86-107 are enriched in basic and acidic residues; the sequence is FDPLHTPTADHRSASDDGRDDL. The disordered stretch occupies residues 86-122; the sequence is FDPLHTPTADHRSASDDGRDDLPEGAESEGTFGEREK.

The protein localises to the nucleus. In terms of biological role, transcriptional regulator; part of the gene cluster that mediates the biosynthesis of the tetrahydroxanthone dimer secalonic acid D. The chain is Transcriptional regulator AacuB from Aspergillus aculeatus (strain ATCC 16872 / CBS 172.66 / WB 5094).